The following is a 360-amino-acid chain: Photosystem II protein D1 3 (360 aa).

Transmembrane regions (helical) follow at residues 29 to 46 (YVGWFGVLMIPTLLTATI), 118 to 133 (HFLLGIFSYMGREWEL), and 142 to 156 (WIAVAYSAPVAAATA). A chlorophyll a-binding site is contributed by histidine 118. Residue tyrosine 126 coordinates pheophytin a. Residues aspartate 170 and glutamate 189 each coordinate [CaMn4O5] cluster. A helical membrane pass occupies residues 197-218 (FHMLGVAGVFGGALFSAMHGSL). Histidine 198 provides a ligand contact to chlorophyll a. A quinone contacts are provided by residues histidine 215 and 264 to 265 (SF). Histidine 215 serves as a coordination point for Fe cation. Histidine 272 contacts Fe cation. The chain crosses the membrane as a helical span at residues 274–288 (FLAAWPVIGIWFASL). 4 residues coordinate [CaMn4O5] cluster: histidine 332, glutamate 333, aspartate 342, and alanine 344. A propeptide spanning residues 345–360 (AGDQAPVALQAPAING) is cleaved from the precursor.

It belongs to the reaction center PufL/M/PsbA/D family. As to quaternary structure, PSII is composed of 1 copy each of membrane proteins PsbA, PsbB, PsbC, PsbD, PsbE, PsbF, PsbH, PsbI, PsbJ, PsbK, PsbL, PsbM, PsbT, PsbX, PsbY, PsbZ, Psb30/Ycf12, peripheral proteins PsbO, CyanoQ (PsbQ), PsbU, PsbV and a large number of cofactors. It forms dimeric complexes. It depends on The D1/D2 heterodimer binds P680, chlorophylls that are the primary electron donor of PSII, and subsequent electron acceptors. It shares a non-heme iron and each subunit binds pheophytin, quinone, additional chlorophylls, carotenoids and lipids. D1 provides most of the ligands for the Mn4-Ca-O5 cluster of the oxygen-evolving complex (OEC). There is also a Cl(-1) ion associated with D1 and D2, which is required for oxygen evolution. The PSII complex binds additional chlorophylls, carotenoids and specific lipids. as a cofactor. Post-translationally, tyr-161 forms a radical intermediate that is referred to as redox-active TyrZ, YZ or Y-Z. C-terminally processed by CtpA; processing is essential to allow assembly of the oxygen-evolving complex and thus photosynthetic growth.

Its subcellular location is the cellular thylakoid membrane. The enzyme catalyses 2 a plastoquinone + 4 hnu + 2 H2O = 2 a plastoquinol + O2. Photosystem II (PSII) is a light-driven water:plastoquinone oxidoreductase that uses light energy to abstract electrons from H(2)O, generating O(2) and a proton gradient subsequently used for ATP formation. It consists of a core antenna complex that captures photons, and an electron transfer chain that converts photonic excitation into a charge separation. The D1/D2 (PsbA/PsbD) reaction center heterodimer binds P680, the primary electron donor of PSII as well as several subsequent electron acceptors. The sequence is that of Photosystem II protein D1 3 from Picosynechococcus sp. (strain ATCC 27264 / PCC 7002 / PR-6) (Agmenellum quadruplicatum).